The sequence spans 138 residues: Thyrotropin subunit beta (138 aa).

The first 20 residues, 1-20, serve as a signal peptide directing secretion; it reads MTAIFLMSMLFGLACGQAMS. 6 cysteine pairs are disulfide-bonded: Cys-22-Cys-72, Cys-36-Cys-87, Cys-39-Cys-125, Cys-47-Cys-103, Cys-51-Cys-105, and Cys-108-Cys-115. A glycan (N-linked (GlcNAc...) asparagine) is linked at Asn-43. The propeptide occupies 133 to 138; the sequence is VLEFSI.

Belongs to the glycoprotein hormones subunit beta family. In terms of assembly, heterodimer of a common alpha chain and a unique beta chain which confers biological specificity to thyrotropin, lutropin, follitropin and gonadotropin.

It localises to the secreted. Its function is as follows. Indispensable for the control of thyroid structure and metabolism. This Sus scrofa (Pig) protein is Thyrotropin subunit beta (TSHB).